Reading from the N-terminus, the 560-residue chain is SWI/SNF complex subunit SWI3A homolog (560 aa).

Residues 1–13 show a composition bias toward low complexity; it reads MSPPVAGAASSGD. The disordered stretch occupies residues 1 to 22; it reads MSPPVAGAASSGDGPPGRPPRE. Residues 24 to 127 enclose the SWIRM domain; the sequence is YTIPASSGWF…FSASPSRPEA (104 aa). The 52-residue stretch at 242 to 293 folds into the SANT domain; the sequence is HSSSAWTDAETLLLLEGVLKHGDDWDLIAQHVRTKNKSECIARLIQLPFGEH. The span at 311 to 330 shows a compositional bias: polar residues; the sequence is TTDGKVNKSTVKESSSQPTE. Disordered stretches follow at residues 311-352 and 414-445; these read TTDG…EEHP and QTRA…PDKK. A compositionally biased stretch (acidic residues) spans 331-342; that stretch reads TVDDMQIDGNED. Composition is skewed to basic and acidic residues over residues 343–352 and 424–445; these read GADKSVEEHP and RQSD…PDKK.

As to quaternary structure, interacts with LFR.

The protein resides in the nucleus. Component of a multiprotein complex equivalent of the SWI/SNF complex, an ATP-dependent chromatin-remodeling complex, which is required for the positive and negative regulation of gene expression of a large number of genes. It changes chromatin structure by altering DNA-histone contacts within a nucleosome, leading eventually to a change in nucleosome position, thus facilitating or repressing binding of gene-specific transcription factors. This Oryza sativa subsp. japonica (Rice) protein is SWI/SNF complex subunit SWI3A homolog.